Reading from the N-terminus, the 377-residue chain is MTDITQILTDLIGFPSITPEDAGCQKYMIQFLEQLGFTCQQLNNGPVSNFFACYGKIGPLLVFAGHTDVVPVGEVSKWDTDPFSLEEKNGMLYGRGVADMKGSLACMLHMARRFIKTYPSFPGRLGFLITSGEEGDEFNLGTPYAMQKLEQQGIVIDYCIVGEPSSSLKTGDVIKIGRRGSLSAKIHLSGKQGHVAYPHLADNPIHRISPVLAELTSMQWDNGNAYFPPTSMQITYIHCGGHAGNIIPGELNLHLNFRYSTEQTDESLKTRVINAFTHHKLNPTIEWRLNGEPFLTNKGILLESCKQTVLEHIGTLPELSTSGGTSDGRFIAPYGVEVIELGLVNATIHQVNECTSLQDLNTLETMYFSICEKLLID.

H66 is a Zn(2+) binding site. Residue D68 is part of the active site. D99 is a binding site for Zn(2+). Residue E133 is the Proton acceptor of the active site. Positions 134, 163, and 349 each coordinate Zn(2+).

Belongs to the peptidase M20A family. DapE subfamily. As to quaternary structure, homodimer. Zn(2+) serves as cofactor. The cofactor is Co(2+).

The catalysed reaction is N-succinyl-(2S,6S)-2,6-diaminopimelate + H2O = (2S,6S)-2,6-diaminopimelate + succinate. The protein operates within amino-acid biosynthesis; L-lysine biosynthesis via DAP pathway; LL-2,6-diaminopimelate from (S)-tetrahydrodipicolinate (succinylase route): step 3/3. Catalyzes the hydrolysis of N-succinyl-L,L-diaminopimelic acid (SDAP), forming succinate and LL-2,6-diaminopimelate (DAP), an intermediate involved in the bacterial biosynthesis of lysine and meso-diaminopimelic acid, an essential component of bacterial cell walls. The polypeptide is Succinyl-diaminopimelate desuccinylase (Legionella pneumophila (strain Lens)).